A 625-amino-acid chain; its full sequence is tRNA (uracil-5-)-methyltransferase homolog A (625 aa).

2 disordered regions span residues 1 to 37 (MSEN…AAPA) and 145 to 165 (RPKA…EPPV). The span at 27 to 37 (PTVSVPPAAPA) shows a compositional bias: low complexity. Residues 73–146 (FKLELQNVPR…RPLSVRLARP (74 aa)) enclose the RRM domain. A coiled-coil region spans residues 180 to 209 (YAEQLERKQLECEQVLQKLAKEIGSTNRAL). Position 378 is a phosphoserine (Ser378). Positions 411, 461, and 510 each coordinate S-adenosyl-L-methionine. Residue Cys538 is the Nucleophile of the active site. Glu581 (proton acceptor) is an active-site residue. Residues 594 to 625 (GTGVLGPHSPPAQPTPGPPDNTLQETGTFPSS) are disordered. Pro residues predominate over residues 601 to 612 (HSPPAQPTPGPP). Ser602 bears the Phosphoserine mark. Positions 614 to 625 (NTLQETGTFPSS) are enriched in polar residues.

This sequence belongs to the class I-like SAM-binding methyltransferase superfamily. RNA M5U methyltransferase family.

The protein localises to the cytoplasm. It is found in the cytosol. The enzyme catalyses uridine(54) in tRNA + S-adenosyl-L-methionine = 5-methyluridine(54) in tRNA + S-adenosyl-L-homocysteine + H(+). It carries out the reaction a uridine in mRNA + S-adenosyl-L-methionine = a 5-methyluridine in mRNA + S-adenosyl-L-homocysteine + H(+). Its function is as follows. S-adenosyl-L-methionine-dependent methyltransferase that catalyzes the formation of 5-methyl-uridine in tRNAs and some mRNAs. Mainly catalyzes the methylation of uridine at position 54 (m5U54) in cytosolic tRNAs. Also able to mediate the formation of 5-methyl-uridine in some mRNAs. This Homo sapiens (Human) protein is tRNA (uracil-5-)-methyltransferase homolog A.